Consider the following 2386-residue polypeptide: Protein kinase rad3 (2386 aa).

The region spanning 1386-1943 (TLGIVSLNCG…LWQLMATIKS (558 aa)) is the FAT domain. The region spanning 2052–2370 (FEDEVDIMNS…QIQELIKSAV (319 aa)) is the PI3K/PI4K catalytic domain. The G-loop stretch occupies residues 2058–2064 (IMNSLQK). A catalytic loop region spans residues 2227 to 2235 (GLGDRHGEN). The interval 2247–2271 (HVDFNCLFDKGLTFEKPEKVPFRLT) is activation loop. Residues 2354 to 2386 (IPLSIEGQIQELIKSAVNPKNLVEMYIGWAAYF) form the FATC domain.

It belongs to the PI3/PI4-kinase family. ATM subfamily. Interacts with crb2 (via BRCT domain). Interacts with chk1.

Its subcellular location is the nucleus. It carries out the reaction L-seryl-[protein] + ATP = O-phospho-L-seryl-[protein] + ADP + H(+). It catalyses the reaction L-threonyl-[protein] + ATP = O-phospho-L-threonyl-[protein] + ADP + H(+). Functionally, serine/threonine kinase which activates checkpoint signaling upon genotoxic stresses. Involved in G2 arrest following DNA damage where it phosphorylates chk1. Phosphorylation of 'Thr-73' and 'Ser-80' of checkpoint mediator crb2 promotes its interaction with chk1. It is also involved in the dependence of mitosis on the completion of DNA replication. The polypeptide is Protein kinase rad3 (rad3) (Schizosaccharomyces pombe (strain 972 / ATCC 24843) (Fission yeast)).